A 234-amino-acid chain; its full sequence is TRGGYLNKFTTVVASIIGVSSLYKVPTKPTTLSPPFISPKPGFMSLPPRKHEVVGGASSSLVAAAVSARNSVISEDLFEGLALFDKASSLEDDGGDNVSEFQASIDDVNDGGGGGGDDELAVSRLGLPQKLVETLEKRGITKLFPIQRAVLVPALEGRDIIGRAKTGTGKTLAFAIPIIKRLTEEDEDNRNSLAGRLPRVLVLAPTRELAKQVETEIKEPAPYLRTVCVYGGVS.

A Q motif motif is present at residues 120–148; that stretch reads LAVSRLGLPQKLVETLEKRGITKLFPIQR. Positions 151 to 234 constitute a Helicase ATP-binding domain; sequence LVPALEGRDI…RTVCVYGGVS (84 aa). 164-171 is a binding site for ATP; that stretch reads AKTGTGKT.

It belongs to the DEAD box helicase family. DDX21/DDX50 subfamily.

This chain is DEAD-box ATP-dependent RNA helicase 3, found in Helianthus annuus (Common sunflower).